The primary structure comprises 272 residues: Phosphate import ATP-binding protein PstB (272 aa).

An ABC transporter domain is found at Val18–Ala257. Gly50–Ser57 lines the ATP pocket.

Belongs to the ABC transporter superfamily. Phosphate importer (TC 3.A.1.7) family. As to quaternary structure, the complex is composed of two ATP-binding proteins (PstB), two transmembrane proteins (PstC and PstA) and a solute-binding protein (PstS).

The protein resides in the cell inner membrane. It catalyses the reaction phosphate(out) + ATP + H2O = ADP + 2 phosphate(in) + H(+). Its function is as follows. Part of the ABC transporter complex PstSACB involved in phosphate import. Responsible for energy coupling to the transport system. The polypeptide is Phosphate import ATP-binding protein PstB (Synechococcus sp. (strain CC9311)).